A 362-amino-acid chain; its full sequence is D-alanine--D-alanine ligase (362 aa).

Positions 153 to 357 (KKIAREAGIP…YADLLTTLVS (205 aa)) constitute an ATP-grasp domain. Position 180–235 (180–235 (RELLGLPVFVKPARGGSSIGISKVDSWRDLPAAIEEAASHDPKVIIEAMITGPEVE)) interacts with ATP. Positions 312, 324, and 326 each coordinate Mg(2+).

Belongs to the D-alanine--D-alanine ligase family. It depends on Mg(2+) as a cofactor. Requires Mn(2+) as cofactor.

The protein localises to the cytoplasm. The catalysed reaction is 2 D-alanine + ATP = D-alanyl-D-alanine + ADP + phosphate + H(+). It participates in cell wall biogenesis; peptidoglycan biosynthesis. Functionally, cell wall formation. This chain is D-alanine--D-alanine ligase, found in Corynebacterium urealyticum (strain ATCC 43042 / DSM 7109).